A 169-amino-acid chain; its full sequence is Cytochrome c-type biogenesis protein CcmE (169 aa).

Residues 1 to 7 (MTRKQRR) are Cytoplasmic-facing. Residues 8 to 28 (MTIIGGSLAVLALAAALVLNA) traverse the membrane as a helical; Signal-anchor for type II membrane protein segment. Topologically, residues 29–169 (LRDSIVFFST…AQGNPQGAVR (141 aa)) are periplasmic. Heme-binding residues include His122 and Tyr126. Residues 143–169 (DDYGGKASDGVKPAATTAQGNPQGAVR) form a disordered region. Positions 158 to 169 (TTAQGNPQGAVR) are enriched in polar residues.

Belongs to the CcmE/CycJ family.

Its subcellular location is the cell inner membrane. Heme chaperone required for the biogenesis of c-type cytochromes. Transiently binds heme delivered by CcmC and transfers the heme to apo-cytochromes in a process facilitated by CcmF and CcmH. This is Cytochrome c-type biogenesis protein CcmE from Bradyrhizobium diazoefficiens (strain JCM 10833 / BCRC 13528 / IAM 13628 / NBRC 14792 / USDA 110).